The sequence spans 334 residues: Aromatic O-demethylase, reductase subunit (334 aa).

The 91-residue stretch at 1 to 91 (MTFAVSVGGR…DTEVRSTADA (91 aa)) folds into the 2Fe-2S ferredoxin-type domain. Cys-35, Cys-40, Cys-43, and Cys-75 together coordinate [2Fe-2S] cluster. In terms of domain architecture, FAD-binding FR-type spans 98-198 (LRDLTATVLE…TGPLGDFHLP (101 aa)). FAD-binding positions include 145-148 (RQYS), 162-164 (HVR), 170-172 (VAT), Thr-215, Phe-330, and Ser-334.

As to quaternary structure, monomer. Forms a heterodimer with GcoA. FAD serves as cofactor. [2Fe-2S] cluster is required as a cofactor.

The enzyme catalyses 2 oxidized [cytochrome P450] + NADH = 2 reduced [cytochrome P450] + NAD(+) + H(+). It participates in aromatic compound metabolism. Part of a two-component P450 system that efficiently O-demethylates diverse aromatic substrates such as guaiacol and a wide variety of lignin-derived monomers. Is likely involved in lignin degradation, allowing Amycolatopsis sp. ATCC 39116 to catabolize plant biomass. GcoB transfers electrons from NADH to the cytochrome P450 subunit GcoA. Highly prefers NADH over NADPH as the electron donor. The polypeptide is Aromatic O-demethylase, reductase subunit (Amycolatopsis sp. (strain ATCC 39116 / 75iv2)).